Here is a 181-residue protein sequence, read N- to C-terminus: Protein Syd (181 aa).

It belongs to the Syd family.

It is found in the cell inner membrane. Interacts with the SecY protein in vivo. May bind preferentially to an uncomplexed state of SecY, thus functioning either as a chelating agent for excess SecY in the cell or as a regulatory factor that negatively controls the translocase function. The protein is Protein Syd of Escherichia fergusonii (strain ATCC 35469 / DSM 13698 / CCUG 18766 / IAM 14443 / JCM 21226 / LMG 7866 / NBRC 102419 / NCTC 12128 / CDC 0568-73).